The following is a 444-amino-acid chain: Structure-specific endonuclease subunit SLX1 (444 aa).

The GIY-YIG domain maps to 23–105 (AFSCCYLLRS…QNTKVSRHAD (83 aa)). The SLX1-type zinc-finger motif lies at 240–295 (CGVCKQRLILQHDIIAVCSHSSCHCAAHLSCLSSHFLKDKDSDSELVPREGTCPTC). The interval 324–354 (RRQRAGTPKGQGLKSVRGRGHSEDENESDAL) is disordered.

It belongs to the SLX1 family. Forms a heterodimer with SLX4. It depends on a divalent metal cation as a cofactor.

Its subcellular location is the nucleus. Catalytic subunit of the SLX1-SLX4 structure-specific endonuclease that resolves DNA secondary structures generated during DNA repair and recombination. Has endonuclease activity towards branched DNA substrates, introducing single-strand cuts in duplex DNA close to junctions with ss-DNA. The chain is Structure-specific endonuclease subunit SLX1 from Paracoccidioides lutzii (strain ATCC MYA-826 / Pb01) (Paracoccidioides brasiliensis).